The primary structure comprises 146 residues: Large ribosomal subunit protein uL15 (146 aa).

Positions 1-18 (MKLHELKPSEGSRKERNR) are enriched in basic and acidic residues. A disordered region spans residues 1 to 57 (MKLHELKPSEGSRKERNRVGRGIGSGNGKTSGKGHKGQNARSGGGVRPGFEGGQMPL). Gly residues-rich tracts occupy residues 21 to 31 (RGIGSGNGKTS) and 42 to 52 (SGGGVRPGFEG).

It belongs to the universal ribosomal protein uL15 family. Part of the 50S ribosomal subunit.

Its function is as follows. Binds to the 23S rRNA. The protein is Large ribosomal subunit protein uL15 of Bacillus pumilus (strain SAFR-032).